The chain runs to 638 residues: Signal recognition particle receptor subunit alpha (638 aa).

Disordered stretches follow at residues 129–205, 218–245, and 262–315; these read KIRA…VELS, IQKH…KKAP, and SAPT…ATKG. 2 stretches are compositionally biased toward basic and acidic residues: residues 137–146 and 153–165; these read KKFEDSEKAK and IETR…EKAK. S177 is subject to Phosphoserine. The segment covering 218 to 239 has biased composition (basic and acidic residues); sequence IQKHGRGLEKSSKSTKSDAPKE. T284 is subject to Phosphothreonine. Phosphoserine occurs at positions 296, 297, and 298. A compositionally biased stretch (polar residues) spans 304–314; it reads AQNASKPSATK. The segment at 419 to 636 is NG domain; the sequence is YVVTFCGVNG…NAKAVVAALM (218 aa). 425–432 contacts GTP; the sequence is GVNGVGKS. A Phosphoserine modification is found at S473. Position 520-524 (520-524) interacts with GTP; the sequence is DTAGR. Phosphothreonine is present on T578. 588-591 contributes to the GTP binding site; that stretch reads TKFD.

The protein belongs to the GTP-binding SRP family. As to quaternary structure, heterodimer with SRPRB. Interacts with the signal recognition particle (SRP) complex subunit SRP54.

The protein resides in the endoplasmic reticulum membrane. Component of the SRP (signal recognition particle) receptor. Ensures, in conjunction with the signal recognition particle, the correct targeting of the nascent secretory proteins to the endoplasmic reticulum membrane system. Forms a guanosine 5'-triphosphate (GTP)-dependent complex with the SRP subunit SRP54. SRP receptor compaction and GTPase rearrangement drive SRP-mediated cotranslational protein translocation into the ER. The polypeptide is Signal recognition particle receptor subunit alpha (Canis lupus familiaris (Dog)).